Reading from the N-terminus, the 173-residue chain is NADH-ubiquinone oxidoreductase chain 6 (173 aa).

A run of 5 helical transmembrane segments spans residues 1-21, 27-47, 48-68, 87-107, and 139-159; these read MTYFVLFLGLCFVLGGLAVAS, YGVVGLVLASVAGCGWFLSLG, ASFVSLVLFMVYLGGMLVVFV, VIGYGMGFAMVLVVGVVIGGF, and WGAGMFLVAGWGLLLTLFVVL.

Belongs to the complex I subunit 6 family.

It localises to the mitochondrion membrane. It catalyses the reaction a ubiquinone + NADH + 5 H(+)(in) = a ubiquinol + NAD(+) + 4 H(+)(out). Functionally, core subunit of the mitochondrial membrane respiratory chain NADH dehydrogenase (Complex I) that is believed to belong to the minimal assembly required for catalysis. Complex I functions in the transfer of electrons from NADH to the respiratory chain. The immediate electron acceptor for the enzyme is believed to be ubiquinone. The protein is NADH-ubiquinone oxidoreductase chain 6 (MT-ND6) of Brachyramphus brevirostris (Kittlitz's murrelet).